Here is a 30-residue protein sequence, read N- to C-terminus: NADH-ubiquinone oxidoreductase 18 kDa subunit (30 aa).

Complex I is composed of about 45 different subunits.

Its subcellular location is the mitochondrion inner membrane. The catalysed reaction is a ubiquinone + NADH + 5 H(+)(in) = a ubiquinol + NAD(+) + 4 H(+)(out). In terms of biological role, transfer of electrons from NADH to the respiratory chain. The immediate electron acceptor for the enzyme is believed to be ubiquinone. This is NADH-ubiquinone oxidoreductase 18 kDa subunit from Solanum tuberosum (Potato).